Reading from the N-terminus, the 389-residue chain is tRNA pseudouridine synthase Pus10 (389 aa).

Asp-213 functions as the Nucleophile in the catalytic mechanism. Residues Tyr-278 and Tyr-350 each contribute to the substrate site.

Belongs to the pseudouridine synthase Pus10 family.

The catalysed reaction is uridine(54) in tRNA = pseudouridine(54) in tRNA. It catalyses the reaction uridine(55) in tRNA = pseudouridine(55) in tRNA. Functionally, responsible for synthesis of pseudouridine from uracil-54 and uracil-55 in the psi GC loop of transfer RNAs. The protein is tRNA pseudouridine synthase Pus10 of Thermoplasma acidophilum (strain ATCC 25905 / DSM 1728 / JCM 9062 / NBRC 15155 / AMRC-C165).